The following is a 333-amino-acid chain: uncharacterized protein (333 aa).

The signal sequence occupies residues 1 to 16 (MRPFLMILSVTYIASA). The N-linked (GlcNAc...) asparagine glycan is linked to N204.

This is an uncharacterized protein from Encephalitozoon cuniculi (strain GB-M1) (Microsporidian parasite).